The following is a 1310-amino-acid chain: MGAAPGRRGPRLLRPPPPLLLLLLLLRPPPAALTLDPGLLPGDFAADEAGARLFASSYNSSAEQVLFRSTAASWAHDTNITAENARRQEEEALLSQEFAEAWGKKAKELYDPVWQNFTDPELRRIIGAVRTLGPANLPLAKRQQYNSLLSNMSQIYSTGKVCFPNKTASCWSLDPDLNNILASSRSYAMLLFAWEGWHNAVGIPLKPLYQEFTALSNEAYRQDGFSDTGAYWRSWYDSPTFEEDLERIYHQLEPLYLNLHAYVRRVLHRRYGDRYINLRGPIPAHLLGNMWAQSWESIYDMVVPFPDKPNLDVTSTMVQKGWNATHMFRVAEEFFTSLGLLPMPPEFWAESMLEKPEDGREVVCHASAWDFYNRKDFRIKQCTQVTMDQLSTVHHEMGHVQYYLQYKDQPVSLRRANPGFHEAIGDVLALSVSTPAHLHKIGLLDHVTNDTESDINYLLKMALEKIAFLPFGYLVDQWRWGVFSGRTPSSRYNFDWWYLRTKYQGICPPVVRNETHFDAGAKFHIPSVTPYIRYFVSFVLQFQFHQALCMEAGHQGPLHQCDIYQSTRAGAKLRAVLQAGCSRPWQEVLKDMVASDALDAQPLLDYFQPVTQWLQEQNERNGEVLGWPEYQWRPPLPNNYPEGIDLVTDEAEASRFVEEYDRSFQAVWNEYAEANWNYNTNITTEASKILLQKNMQIANHTLTYGNWARRFDVSNFQNATSKRIIKKVQDLQRAVLPVKELEEYNQILLDMETIYSVANVCRVDGSCLQLEPDLTNLMATSRKYDELLWVWTSWRDKVGRAILPYFPKYVEFTNKAARLNGYVDAGDSWRSMYETPTLEQDLERLFQELQPLYLNLHAYVGRALHRHYGAQHINLEGPIPAHLLGNMWAQTWSNIYDLVAPFPSASTMDATEAMIKQGWTPRRMFEEADKFFISLGLLPVPPEFWNKSMLEKPTDGREVVCHASAWDFYNGKDFRIKQCTTVNMEDLVVVHHEMGHIQYFMQYKDLPVALREGANPGFHEAIGDVLALSVSTPKHLHSINLLSSEGGGYEHDINFLMKMALDKIAFIPFSYLVDEWRWRVFDGSITKENYNQEWWSLRLKYQGLCPPAPRSQGDFDPGAKFHIPSSVPYIRYFVSFIIQFQFHEALCKAAGHTGPLHTCDIYQSKEAGKRLADAMKLGYSKPWPEAMKVITGQPNMSASAMMNYFKPLMDWLLTENGRHGEKLGWPQYTWTPNSARSEGSLPDSGRVNFLGMNLDAQQARVGQWVLLFLGVALLLASLGLTQRLFSIRYQSLRQPHHGPQFGSEVELRHS.

The signal sequence occupies residues 1-33 (MGAAPGRRGPRLLRPPPPLLLLLLLLRPPPAAL). The Extracellular segment spans residues 34-1260 (TLDPGLLPGD…GMNLDAQQAR (1227 aa)). 2 consecutive Peptidase M2 domains span residues 45–628 (AADE…LGWP) and 647–1226 (VTDE…LGWP). 3 N-linked (GlcNAc...) asparagine glycosylation sites follow: asparagine 59, asparagine 79, and asparagine 151. A disulfide bridge links cysteine 162 with cysteine 170. Tyrosine 236 contacts chloride. N-linked (GlcNAc...) asparagine glycosylation is present at asparagine 323. Cysteine 364 and cysteine 382 are oxidised to a cystine. Position 395 (histidine 395) interacts with Zn(2+). The active-site Proton acceptor 1 is glutamate 396. Zn(2+) contacts are provided by histidine 399 and glutamate 422. 2 N-linked (GlcNAc...) asparagine glycosylation sites follow: asparagine 449 and asparagine 513. Catalysis depends on histidine 524, which acts as the Proton donor 1. Residue arginine 533 coordinates chloride. Cysteine 549 and cysteine 561 are disulfide-bonded. Residues asparagine 681, asparagine 699, and asparagine 718 are each glycosylated (N-linked (GlcNAc...) asparagine). Cysteine 761 and cysteine 767 are oxidised to a cystine. 2 residues coordinate chloride: arginine 795 and tyrosine 833. Asparagine 946 carries N-linked (GlcNAc...) asparagine glycosylation. A disulfide bridge links cysteine 961 with cysteine 979. A Zn(2+)-binding site is contributed by histidine 992. Glutamate 993 acts as the Proton acceptor 2 in catalysis. Residues histidine 996 and glutamate 1020 each contribute to the Zn(2+) site. The chloride site is built by tryptophan 1094 and arginine 1098. The Proton donor 2 role is filled by histidine 1122. Arginine 1131 contacts chloride. Cysteines 1147 and 1159 form a disulfide. Asparagine 1195 carries N-linked (GlcNAc...) asparagine glycosylation. Positions 1219–1260 (HGEKLGWPQYTWTPNSARSEGSLPDSGRVNFLGMNLDAQQAR) are juxtamembrane stalk. Residues 1261–1281 (VGQWVLLFLGVALLLASLGLT) traverse the membrane as a helical segment. At 1282-1310 (QRLFSIRYQSLRQPHHGPQFGSEVELRHS) the chain is on the cytoplasmic side. Serine 1303 bears the Phosphoserine mark.

Belongs to the peptidase M2 family. In terms of assembly, monomer and homodimer; homodimerizes following binding to an inhibitor. Interacts with calmodulin (CALM1, CALM2 or CALM3); interaction takes place in the cytoplasmic region and regulates phosphorylation and proteolytic cleavage. Requires Zn(2+) as cofactor. The cofactor is chloride. N-glycosylated. In terms of processing, phosphorylated by CK2 on Ser-1303; which allows membrane retention. Phosphorylated on tyrosine residues on its extracellular part, promoting cleavage by secretase enzymes and formation of the soluble form (Angiotensin-converting enzyme, soluble form). Post-translationally, produced following proteolytic cleavage by secretase enzymes that cleave the transmembrane form in the juxtamembrane stalk region upstream of the transmembrane region. Cleavage can take place at different sites of the juxtamembrane stalk region. As to expression, testis-specific isoform is expressed in spermatocytes, adult testis.

It is found in the cell membrane. Its subcellular location is the cytoplasm. The protein resides in the secreted. The catalysed reaction is Release of a C-terminal dipeptide, oligopeptide-|-Xaa-Yaa, when Xaa is not Pro, and Yaa is neither Asp nor Glu. Thus, conversion of angiotensin I to angiotensin II, with increase in vasoconstrictor activity, but no action on angiotensin II.. The enzyme catalyses angiotensin I + H2O = L-histidyl-L-leucine + angiotensin II. It carries out the reaction bradykinin + H2O = L-Phe-L-Arg + bradykinin(1-7). It catalyses the reaction substance P + H2O = substance P(1-9) + L-Leu-L-Met-NH2. The catalysed reaction is substance P + H2O = substance P(1-8) + Gly-L-Leu-L-Met-NH2. The enzyme catalyses substance P + H2O = L-Phe-L-Phe-Gly-L-Leu-L-Met-NH2 + substance P(1-6). It carries out the reaction neurotensin + H2O = neurotensin(1-11) + L-isoleucyl-L-leucine. It catalyses the reaction goralatide + H2O = N-acetyl-L-seryl-L-aspartate + L-lysyl-L-proline. The catalysed reaction is Met-enkephalin + H2O = L-phenylalanyl-L-methionine + L-tyrosylglycylglycine. The enzyme catalyses Leu-enkephalin + H2O = L-tyrosylglycylglycine + L-phenylalanyl-L-leucine. It carries out the reaction Met-enkephalin-Arg-Phe + H2O = L-arginyl-L-phenylalanine + Met-enkephalin. The dipeptidyl carboxypeptidase activity is strongly activated by chloride. Specifically inhibited by lisinopril. Inhibited by mixanpril, an orally-active drug used for the treatment of hypertension. With respect to regulation, strongly inhibited by lisinopril and captopril. In terms of biological role, dipeptidyl carboxypeptidase that removes dipeptides from the C-terminus of a variety of circulating hormones, such as angiotensin I, bradykinin or enkephalins, thereby playing a key role in the regulation of blood pressure, electrolyte homeostasis or synaptic plasticity. Composed of two similar catalytic domains, each possessing a functional active site, with different selectivity for substrates. Plays a major role in the angiotensin-renin system that regulates blood pressure and sodium retention by the kidney by converting angiotensin I to angiotensin II, resulting in an increase of the vasoconstrictor activity of angiotensin. Also able to inactivate bradykinin, a potent vasodilator, and therefore enhance the blood pressure response. Acts as a regulator of synaptic transmission by mediating cleavage of neuropeptide hormones, such as substance P, neurotensin or enkephalins. Catalyzes degradation of different enkephalin neuropeptides (Met-enkephalin, Leu-enkephalin, Met-enkephalin-Arg-Phe and possibly Met-enkephalin-Arg-Gly-Leu). Acts as a regulator of synaptic plasticity in the nucleus accumbens of the brain by mediating cleavage of Met-enkephalin-Arg-Phe, a strong ligand of Mu-type opioid receptor OPRM1, into Met-enkephalin. Met-enkephalin-Arg-Phe cleavage by ACE decreases activation of OPRM1, leading to long-term synaptic potentiation of glutamate release. Also acts as a regulator of hematopoietic stem cell differentiation by mediating degradation of hemoregulatory peptide N-acetyl-SDKP (AcSDKP). Acts as a regulator of cannabinoid signaling pathway by mediating degradation of hemopressin, an antagonist peptide of the cannabinoid receptor CNR1. Involved in amyloid-beta metabolism by catalyzing degradation of Amyloid-beta protein 40 and Amyloid-beta protein 42 peptides, thereby preventing plaque formation. Catalyzes cleavage of cholecystokinin (maturation of Cholecystokinin-8 and Cholecystokinin-5) and Gonadoliberin-1 (both maturation and degradation) hormones. Degradation of hemoregulatory peptide N-acetyl-SDKP (AcSDKP) and amyloid-beta proteins is mediated by the N-terminal catalytic domain, while angiotensin I and cholecystokinin cleavage is mediated by the C-terminal catalytic region. Its function is as follows. Soluble form that is released in blood plasma and other body fluids following proteolytic cleavage in the juxtamembrane stalk region. Isoform produced by alternative promoter usage that is specifically expressed in spermatocytes and adult testis, and which is required for male fertility. In contrast to somatic isoforms, only contains one catalytic domain. Acts as a dipeptidyl carboxypeptidase that removes dipeptides from the C-terminus of substrates. The identity of substrates that are needed for male fertility is unknown. May also have a glycosidase activity which releases GPI-anchored proteins from the membrane by cleaving the mannose linkage in the GPI moiety. The GPIase activity was reported to be essential for the egg-binding ability of the sperm. This activity is however unclear and has been challenged by other groups, suggesting that it may be indirect. The sequence is that of Angiotensin-converting enzyme from Oryctolagus cuniculus (Rabbit).